The following is a 384-amino-acid chain: 5-amino-6-(D-ribitylamino)uracil--L-tyrosine 4-hydroxyphenyl transferase 2 (384 aa).

One can recognise a Radical SAM core domain in the interval 53–286 (VSYVVNRNIY…IAISRVILHT (234 aa)). Cysteine 67, cysteine 71, and cysteine 74 together coordinate [4Fe-4S] cluster.

This sequence belongs to the radical SAM superfamily. CofH family. As to quaternary structure, consists of two subunits, CofG and CofH. [4Fe-4S] cluster serves as cofactor.

The enzyme catalyses 5-amino-6-(D-ribitylamino)uracil + L-tyrosine + S-adenosyl-L-methionine = 5-amino-5-(4-hydroxybenzyl)-6-(D-ribitylimino)-5,6-dihydrouracil + 2-iminoacetate + 5'-deoxyadenosine + L-methionine + H(+). It functions in the pathway cofactor biosynthesis; coenzyme F0 biosynthesis. Catalyzes the radical-mediated synthesis of 5-amino-5-(4-hydroxybenzyl)-6-(D-ribitylimino)-5,6-dihydrouracil from 5-amino-6-(D-ribitylamino)uracil and L-tyrosine. In Methanosarcina mazei (strain ATCC BAA-159 / DSM 3647 / Goe1 / Go1 / JCM 11833 / OCM 88) (Methanosarcina frisia), this protein is 5-amino-6-(D-ribitylamino)uracil--L-tyrosine 4-hydroxyphenyl transferase 2.